Consider the following 670-residue polypeptide: UvrABC system protein B (670 aa).

The 387-residue stretch at N28 to I414 folds into the Helicase ATP-binding domain. An ATP-binding site is contributed by G41–T48. Residues Y94–I117 carry the Beta-hairpin motif. Positions Q432–I594 constitute a Helicase C-terminal domain. The region spanning N631–K666 is the UVR domain.

Belongs to the UvrB family. Forms a heterotetramer with UvrA during the search for lesions. Interacts with UvrC in an incision complex.

Its subcellular location is the cytoplasm. Functionally, the UvrABC repair system catalyzes the recognition and processing of DNA lesions. A damage recognition complex composed of 2 UvrA and 2 UvrB subunits scans DNA for abnormalities. Upon binding of the UvrA(2)B(2) complex to a putative damaged site, the DNA wraps around one UvrB monomer. DNA wrap is dependent on ATP binding by UvrB and probably causes local melting of the DNA helix, facilitating insertion of UvrB beta-hairpin between the DNA strands. Then UvrB probes one DNA strand for the presence of a lesion. If a lesion is found the UvrA subunits dissociate and the UvrB-DNA preincision complex is formed. This complex is subsequently bound by UvrC and the second UvrB is released. If no lesion is found, the DNA wraps around the other UvrB subunit that will check the other stand for damage. In Onion yellows phytoplasma (strain OY-M), this protein is UvrABC system protein B.